Here is a 165-residue protein sequence, read N- to C-terminus: Large ribosomal subunit protein uL10 (165 aa).

The protein belongs to the universal ribosomal protein uL10 family. In terms of assembly, part of the ribosomal stalk of the 50S ribosomal subunit. The N-terminus interacts with L11 and the large rRNA to form the base of the stalk. The C-terminus forms an elongated spine to which L12 dimers bind in a sequential fashion forming a multimeric L10(L12)X complex.

In terms of biological role, forms part of the ribosomal stalk, playing a central role in the interaction of the ribosome with GTP-bound translation factors. The polypeptide is Large ribosomal subunit protein uL10 (Yersinia pseudotuberculosis serotype IB (strain PB1/+)).